The following is a 183-amino-acid chain: MHLLPELASHHAVSIPELLVSRDERQARQHAWLKRHPVPLVSFTVVAPGPIKDSEVTRRIFNHGVTALRALAAKQGWQIQEQAALVSASGPEGMLSIAAPARDLKLATIELEHSHPLGRLWDIDVLTPEGDILSRRDYSLPPRRCLLCEQSAAVCARGKTHQLTDLLNRMEALLNDVDACNVN.

This sequence belongs to the CitX family.

The catalysed reaction is apo-[citrate lyase ACP] + 2'-(5''-triphospho-alpha-D-ribosyl)-3'-dephospho-CoA = holo-[citrate lyase ACP] + diphosphate. In terms of biological role, transfers 2-(5''-triphosphoribosyl)-3'-dephosphocoenzyme-A on a serine residue to the apo-acyl carrier protein (gamma chain) of the citrate lyase to yield holo-acyl carrier protein. The polypeptide is Apo-citrate lyase phosphoribosyl-dephospho-CoA transferase (Escherichia coli O6:K15:H31 (strain 536 / UPEC)).